The primary structure comprises 495 residues: MSSSRLIKCLSSNNYIVRSFSKSSIPTTPTPDFPGEYKEPIVKTQIPGPQSKALIERLNKLQDPRAAHFFADYANSRGNYISDVDGNILLDLYCQIASIPIGYNNPELIKAAKSDRWVSAIINRPSLGVLPPKDWPALIENSFMQVSPKGLNQVFTAMCGSCANECAYKAVFMHYQHVKRGGKPFTPEELSSCMKNQEPGSPSLSILSFKKGFHGRTFGTLSTTRSKAIHKLDIPAFDWPAATFPDLKYPLAEHAKENREIEDRCLQEVEQLIKTWHIPVAGIIVEPIQAEGGDNYATPYFFQGLRDITKKHGVSMIVDEVQTGMGATGKFWAHEHWNLTSPPDIVTFSKKMQAAGFYHNLDYRPSESYRNFNTWMGDPVRALELEVVIGEIKKNHLLDNVVITGNYLKDGLFDIAARYPGLIQNIRGEGTFLAIDFPTPAERDRVISHIRLLGVEMGGCGERSIRFRPMLVCQPSHINQFLNRFDQTMKELYKN.

Gly-160 to Ser-161 provides a ligand contact to pyridoxal 5'-phosphate. Arg-216 contributes to the substrate binding site. Position 350 is an N6-(pyridoxal phosphate)lysine (Lys-350). Thr-374 is a pyridoxal 5'-phosphate binding site.

This sequence belongs to the class-III pyridoxal-phosphate-dependent aminotransferase family. Homodimer. It depends on pyridoxal 5'-phosphate as a cofactor.

The enzyme catalyses 4-aminobutanoate + 2-oxoglutarate = succinate semialdehyde + L-glutamate. The polypeptide is 4-aminobutyrate aminotransferase (gabT) (Dictyostelium discoideum (Social amoeba)).